We begin with the raw amino-acid sequence, 413 residues long: Histidine--tRNA ligase (413 aa).

The protein belongs to the class-II aminoacyl-tRNA synthetase family.

Its subcellular location is the cytoplasm. It catalyses the reaction tRNA(His) + L-histidine + ATP = L-histidyl-tRNA(His) + AMP + diphosphate + H(+). The protein is Histidine--tRNA ligase of Methanosarcina acetivorans (strain ATCC 35395 / DSM 2834 / JCM 12185 / C2A).